The following is a 108-amino-acid chain: Nucleoid-associated protein Rmet_2128 (108 aa).

A compositionally biased stretch (polar residues) spans 86 to 96 (TTQEKMGSMTS). Positions 86-108 (TTQEKMGSMTSGLPLPPGFKLPF) are disordered. Residues 99–108 (PLPPGFKLPF) show a composition bias toward pro residues.

This sequence belongs to the YbaB/EbfC family. Homodimer.

It is found in the cytoplasm. The protein localises to the nucleoid. In terms of biological role, binds to DNA and alters its conformation. May be involved in regulation of gene expression, nucleoid organization and DNA protection. This is Nucleoid-associated protein Rmet_2128 from Cupriavidus metallidurans (strain ATCC 43123 / DSM 2839 / NBRC 102507 / CH34) (Ralstonia metallidurans).